The chain runs to 716 residues: ATP-dependent zinc metalloprotease FTSH 1, chloroplastic (716 aa).

Residues 1–48 (MASNSLLRSSSNFFLGSHIIISSPTPKTTRKPSFPFSFVSRAKYQITR) constitute a chloroplast transit peptide. A thylakoid-targeting transit peptide spans 49–86 (SSQDENSPNGKPNSPFSSQVALAAILLSSISSSPLALA). A helical membrane pass occupies residues 204–224 (FTVIGNLIFPLLAFGGLFLLF). An ATP-binding site is contributed by 302–309 (GPPGTGKT). Residue H524 coordinates Zn(2+). E525 is a catalytic residue. Zn(2+) is bound by residues H528 and D605.

The protein in the N-terminal section; belongs to the AAA ATPase family. It in the C-terminal section; belongs to the peptidase M41 family. As to quaternary structure, interacts with CHIP and HSP70. Heterohexamers with FTSH2, FTSH5 and FTSH8. Zn(2+) serves as cofactor. Post-translationally, the FTSH1 precursor is ubiquitinated by CHIP in the cytoplasm. In terms of tissue distribution, ubiquitous.

It is found in the plastid. The protein localises to the chloroplast thylakoid membrane. In terms of biological role, part of a complex that function as an ATP-dependent zinc metallopeptidase. Involved in the thylakoid formation and in the removal of damaged D1 in the photosystem II, preventing cell death under high-intensity light conditions. The sequence is that of ATP-dependent zinc metalloprotease FTSH 1, chloroplastic (FTSH1) from Arabidopsis thaliana (Mouse-ear cress).